The following is an 88-amino-acid chain: Small ribosomal subunit protein uS17 (88 aa).

This sequence belongs to the universal ribosomal protein uS17 family. Part of the 30S ribosomal subunit.

Its function is as follows. One of the primary rRNA binding proteins, it binds specifically to the 5'-end of 16S ribosomal RNA. The polypeptide is Small ribosomal subunit protein uS17 (Mycoplasmopsis pulmonis (strain UAB CTIP) (Mycoplasma pulmonis)).